Reading from the N-terminus, the 552-residue chain is Kumamolisin (552 aa).

A compositionally biased stretch (basic and acidic residues) spans 1-17; it reads MSDMEKPWKEEEKREVL. A disordered region spans residues 1 to 34; it reads MSDMEKPWKEEEKREVLAGHARRQAPQAVDKGPV. The Peptidase S53 domain occupies 193 to 546; it reads AYTPLDVAQA…IRLLQALLPS (354 aa). Residues glutamate 266, aspartate 270, and serine 466 each act as charge relay system in the active site. Ca(2+)-binding residues include aspartate 504, isoleucine 505, glycine 522, glycine 524, and aspartate 526.

As to quaternary structure, forms monomeric and dimeric crystals. It depends on Ca(2+) as a cofactor. Post-translationally, autocatalytically processed.

It localises to the secreted. It catalyses the reaction The enzyme preferentially hydrolyzes peptides having an Ala or Pro residue at P2 position and prefers such charged amino acid residues as Glu or Arg at the P2' position. In the oxidized insulin B chain, kumamolysin preferentially cleaves between Leu(15) and Tyr(16).. Inactivated at 22.4 and 37 degrees Celsius, but not at 60 degrees Celsius, by aldehyde-type inhibitors such as acetyl-Ile-Ala-Phe-CHO and acetyl-Ile-Pro-Phe-CHO. Insensitive to the known carboxyl proteinase inhibitors pepstatin, diazoacetyl-DL-norleucine methyl ester (DAN) and 1,2-epoxy-3-(p-nitrophenoxy)propane (EPNP). Not inhibited by Ala-Ala-Phe-chloromethylketone, an inhibitor of the human tripeptidyl-peptidase 1. Thermostable pepstatin-insensitive serine-carboxyl proteinase. Preferentially hydrolyzes synthetic peptides having an Ala or Pro residue at the P2 position and charged amino acids such as Glu or Arg at the P2' position. In vitro, specifically hydrolyzes the Leu-15-Tyr-16 peptide bond in oxidized insulin B-chain. Additional cleavage of oxidized insulin B-chain at Phe-25-Tyr-26 is detected at a considerably lower rate. Can hydrolyze collagen and the chromogenic substrate azocoll. Shows lower activity with albumin and casein. Shows very weak tripeptidyl peptidase activity. This chain is Kumamolisin, found in Bacillus sp. (strain MN-32).